A 245-amino-acid chain; its full sequence is MVVGTSCQPQHGLYLLLLLLALPLRSQANAGCYGIPGMPGLPGTPGKDGHDGLQGPKGEPGIPAIPGTQGPKGQKGEPGMPGHRGKNGPMGTSGSPGDPGPRGPPGEPGEEGRYKQKHQSVFTVTRQTAQYPAANGLVKFNSAITNPQGDYNTNTGKFTCKVPGLYYFVHHTSQTANLCVQLLLNNAKVTSFCDHMSNSKQVSSGGVLLRLQRGDEVWLAVNDYNGMVGTEGSDSVFSGFLLFPD.

A signal peptide spans 1–28 (MVVGTSCQPQHGLYLLLLLLALPLRSQA). Positions 31 to 112 (GCYGIPGMPG…GPPGEPGEEG (82 aa)) constitute a Collagen-like domain. 5 positions are modified to 4-hydroxyproline: proline 36, proline 39, proline 42, proline 45, and proline 63. The tract at residues 42 to 119 (PGTPGKDGHD…EEGRYKQKHQ (78 aa)) is disordered. Residue lysine 75 is modified to 5-hydroxylysine. Lysine 75 carries an O-linked (Gal...) hydroxylysine glycan. 4-hydroxyproline is present on residues proline 81, proline 96, proline 99, and proline 105. Residues 98-107 (DPGPRGPPGE) are compositionally biased toward pro residues. Residues 115 to 245 (KQKHQSVFTV…VFSGFLLFPD (131 aa)) form the C1q domain. A disulfide bridge connects residues cysteine 179 and cysteine 193.

In terms of assembly, core component of the complement C1 complex, a calcium-dependent complex composed of 1 molecule of the C1Q subcomplex, 2 molecules of C1R and 2 molecules of C1S. The C1Q subcomplex is composed 18 subunits: 3 chains of C1QA, C1QB, and C1QC trimerize to form 6 collagen-like triple helices connected to six globular ligand-recognition modules (C1q domain). Post-translationally, O-linked glycans consist of Glc-Gal disaccharides bound to the oxygen atom of post-translationally added hydroxyl groups.

Its subcellular location is the secreted. The protein resides in the cell surface. Its activity is regulated as follows. The C1Q subcomplex is inhibited by sulfated molecules, such as triterpenoid sulfates, heparan sulfate, or chondroitin sulfates. Core component of the complement C1 complex, a multiprotein complex that initiates the classical pathway of the complement system, a cascade of proteins that leads to phagocytosis and breakdown of pathogens and signaling that strengthens the adaptive immune system. The classical complement pathway is initiated by the C1Q subcomplex of the C1 complex, which specifically binds IgG or IgM immunoglobulins complexed with antigens, forming antigen-antibody complexes on the surface of pathogens: C1QA, together with C1QB and C1QC, specifically recognizes and binds the Fc regions of IgG or IgM via its C1q domain. Immunoglobulin-binding activates the proenzyme C1R, which cleaves C1S, initiating the proteolytic cascade of the complement system. The C1Q subcomplex is activated by a hexamer of IgG complexed with antigens, while it is activated by a pentameric IgM. The C1Q subcomplex also recognizes and binds phosphatidylserine exposed on the surface of cells undergoing programmed cell death, possibly promoting activation of the complement system. This is Complement C1q subcomponent subunit C from Rattus norvegicus (Rat).